A 580-amino-acid chain; its full sequence is MDYPKMDYFLDVESAHRLLDVESAQRFFYSQGAQARRATLLLPPTLMAASSEDDIDRRPIRRVRSKSDTPYLAEARISFNLGAAEEVERLAAMRSDSLVPGTHTPPIRRRSKFANLGRIFKPWKWRKKKSEKFKHTSAALERKISMRQSREELIKRGVLKEIYDKDGELSISNEEDSLENGQSLSSSQLSLPALSEMEPVPMPRDPCSYEVLQPSDIMDGPDPGAPVKLPCLPVKLSPPLPPKKVMICMPVGGPDLSLVSYTAQKSGQQGVAQHHHTVLPSQIQHQLQYGSHGQHLPSTTGSLPMHPSGCRMIDELNKTLAMTMQRLESSEQRVPCSTSYHSSGLHSGDGVTKAGPMGLPEIRQVPTVVIECDDNKENVPHESDYEDSSCLYTREEEEEEEDEDDDSSLYTSSLAMKVCRKDSLAIKLSNRPSKRELEEKNILPRQTDEERLELRQQIGTKLTRRLSQRPTAEELEQRNILKPRNEQEEQEEKREIKRRLTRKLSQRPTVEELRERKILIRFSDYVEVADAQDYDRRADKPWTRLTAADKAAIRKELNEFKSTEMEVHELSRHLTRFHRP.

Phosphoserine occurs at positions 67 and 78. A Phosphothreonine modification is found at Thr104. A Nuclear localization signal motif is present at residues Arg108–Lys129. One copy of the RPEL 1 repeat lies at Ala138–Tyr163. Disordered stretches follow at residues Glu331–Gly355 and Lys376–Tyr410. Polar residues predominate over residues Pro335–Leu345. Over residues Glu395–Ser407 the composition is skewed to acidic residues. RPEL repeat units follow at residues Asp422 to Thr447, Thr460 to Arg484, and Arg498 to Ser523. The tract at residues Leu462 to Arg494 is disordered. Ser467 carries the post-translational modification Phosphoserine. Over residues Thr471–Arg494 the composition is skewed to basic and acidic residues. At Ser505 the chain carries Phosphoserine.

Belongs to the phosphatase and actin regulator family. As to quaternary structure, interacts (via RPEL repeats) with ACTA1 and PPP1CA; ACTA1 and PPP1CA compete for the same binding site. In terms of tissue distribution, detected in umbilical vein endothelial cells.

It is found in the cytoplasm. Its subcellular location is the synapse. The protein localises to the nucleus. Functionally, binds actin monomers (G actin) and plays a role in multiple processes including the regulation of actin cytoskeleton dynamics, actin stress fibers formation, cell motility and survival, formation of tubules by endothelial cells, and regulation of PPP1CA activity. Involved in the regulation of cortical neuron migration and dendrite arborization. This Homo sapiens (Human) protein is Phosphatase and actin regulator 1 (PHACTR1).